A 76-amino-acid chain; its full sequence is MATFDKVKDIVVDQLGVDEDQVTMEANFTEDLEADSLDIVELIMAMEEEFDMEISDEEAEKMSTVGDVVNYIEQNQ.

In terms of domain architecture, Carrier spans 1–76 (MATFDKVKDI…DVVNYIEQNQ (76 aa)). S36 is subject to O-(pantetheine 4'-phosphoryl)serine.

This sequence belongs to the acyl carrier protein (ACP) family. In terms of processing, 4'-phosphopantetheine is transferred from CoA to a specific serine of apo-ACP by AcpS. This modification is essential for activity because fatty acids are bound in thioester linkage to the sulfhydryl of the prosthetic group.

It is found in the cytoplasm. The protein operates within lipid metabolism; fatty acid biosynthesis. Its function is as follows. Carrier of the growing fatty acid chain in fatty acid biosynthesis. The protein is Acyl carrier protein of Natranaerobius thermophilus (strain ATCC BAA-1301 / DSM 18059 / JW/NM-WN-LF).